The primary structure comprises 266 residues: Regulatory protein RecX (266 aa).

Belongs to the RecX family.

It localises to the cytoplasm. In terms of biological role, modulates RecA activity. The chain is Regulatory protein RecX from Leuconostoc citreum (strain KM20).